The following is a 370-amino-acid chain: Phosphate acyltransferase (370 aa).

The tract at residues 349–370 (SAGRAGQDAPDEMAAPGRSEKR) is disordered.

This sequence belongs to the PlsX family. As to quaternary structure, homodimer. Probably interacts with PlsY.

It localises to the cytoplasm. It carries out the reaction a fatty acyl-[ACP] + phosphate = an acyl phosphate + holo-[ACP]. The protein operates within lipid metabolism; phospholipid metabolism. In terms of biological role, catalyzes the reversible formation of acyl-phosphate (acyl-PO(4)) from acyl-[acyl-carrier-protein] (acyl-ACP). This enzyme utilizes acyl-ACP as fatty acyl donor, but not acyl-CoA. This is Phosphate acyltransferase from Cereibacter sphaeroides (strain ATCC 17023 / DSM 158 / JCM 6121 / CCUG 31486 / LMG 2827 / NBRC 12203 / NCIMB 8253 / ATH 2.4.1.) (Rhodobacter sphaeroides).